The chain runs to 279 residues: Threonylcarbamoyl-AMP synthase (279 aa).

The N-terminal 55 residues, 1–55 (MSPARRCRGMRAAVAASVGLSEGPAGSRSGRLFRPPSPAPAAPGARLLRLPGSGA), are a transit peptide targeting the mitochondrion. Residues 21 to 41 (SEGPAGSRSGRLFRPPSPAPA) are disordered. Phosphoserine is present on S60. The region spanning 67–257 (TEALRAAVAE…KFGIIRPGCA (191 aa)) is the YrdC-like domain.

Belongs to the SUA5 family. Interacts with RSC1A1. Ubiquitously expressed.

The protein localises to the cytoplasm. The protein resides in the mitochondrion. Its subcellular location is the cell membrane. The enzyme catalyses L-threonine + hydrogencarbonate + ATP = L-threonylcarbamoyladenylate + diphosphate + H2O. Functionally, cytoplasmic and mitochondrial threonylcarbamoyl-AMP synthase required for the formation of a threonylcarbamoyl group on adenosine at position 37 (t(6)A37) in tRNAs that read codons beginning with adenine. Catalyzes the conversion of L-threonine, HCO(3)(-)/CO(2) and ATP to give threonylcarbamoyl-AMP (TC-AMP) as the acyladenylate intermediate, with the release of diphosphate. Participates in t(6)A37 formation in cytoplasmic and mitochondrial tRNAs. May regulate the activity of some transporters. In Homo sapiens (Human), this protein is Threonylcarbamoyl-AMP synthase.